A 90-amino-acid chain; its full sequence is Lantipeptide prochlorosin 1.7 (90 aa).

Residues 1–68 (MSEEQLKAFI…DAELEGVAGG (68 aa)) constitute a propeptide that is removed on maturation. 2,3-didehydrobutyrine occurs at positions 69 and 73. A cross-link (lanthionine (Ser-Cys)) is located at residues 76 to 79 (SITC). Cross-links (beta-methyllanthionine (Thr-Cys)) lie at residues 78 to 82 (TCETC) and 81 to 90 (TCDLLVGKMC).

Post-translationally, cross-links are proved in vitro, when coepressed in E.coli with the ProcM lanthionine synthetase. The lanthionine residue has a DL configuration (with 2S,6R stereochemistry), whereas the beta-methyllanthionine residues have a DL configuration (with 2S,3S,6R stereochemistry). In terms of processing, maturation of prochlorosin involves the enzymatic conversion of Thr, and Ser into dehydrated AA and the formation of thioether bonds with cysteines. This is followed by membrane translocation and cleavage of the modified precursor.

The protein resides in the secreted. Its function is as follows. Lanthionine-containing peptide (lantipeptide) with unknown function. Does not show antibiotic activity against Lactococcus lactis 117 and Bacillus subtilis 6633 bacteria. Organisms that produce this peptide live in oligotrophic environments at very dilute concentrations, suggesting this peptide is not secreted to influence other bacteria. The chain is Lantipeptide prochlorosin 1.7 from Prochlorococcus marinus (strain MIT 9313).